The chain runs to 326 residues: Putative ribose-phosphate pyrophosphokinase 2 (326 aa).

Residues D43–E45 and R102–Q103 contribute to the ATP site. H136 serves as a coordination point for Mg(2+). Residues D225 and N229–T233 each bind D-ribose 5-phosphate.

In terms of assembly, homohexamer. Requires Mg(2+) as cofactor.

It localises to the cytoplasm. It catalyses the reaction D-ribose 5-phosphate + ATP = 5-phospho-alpha-D-ribose 1-diphosphate + AMP + H(+). It functions in the pathway metabolic intermediate biosynthesis; 5-phospho-alpha-D-ribose 1-diphosphate biosynthesis; 5-phospho-alpha-D-ribose 1-diphosphate from D-ribose 5-phosphate (route I): step 1/1. In terms of biological role, involved in the biosynthesis of the central metabolite phospho-alpha-D-ribosyl-1-pyrophosphate (PRPP) via the transfer of pyrophosphoryl group from ATP to 1-hydroxyl of ribose-5-phosphate (Rib-5-P). The protein is Putative ribose-phosphate pyrophosphokinase 2 of Streptococcus pyogenes serotype M6 (strain ATCC BAA-946 / MGAS10394).